A 398-amino-acid polypeptide reads, in one-letter code: ATP-dependent RNA helicase eIF4A (398 aa).

The Q motif signature appears at 25 to 53 (DSFDSMELKPELLRGIYAYGFERPSAIQQ). A Helicase ATP-binding domain is found at 56–226 (ILPIIKGNDV…TKFMRDPVRI (171 aa)). 69–76 (AQSGTGKT) contacts ATP. The DEAD box signature appears at 174–177 (DEAD). The 162-residue stretch at 237–398 (GIKQFYIAVE…EMPMNVADLI (162 aa)) folds into the Helicase C-terminal domain.

It belongs to the DEAD box helicase family. eIF4A subfamily. Component of the eIF4F complex, which composition varies with external and internal environmental conditions. It is composed of at least eIF4A, eIF4E and eIF4G.

It localises to the cytoplasm. It catalyses the reaction ATP + H2O = ADP + phosphate + H(+). Its function is as follows. ATP-dependent RNA helicase which is a subunit of the eIF4F complex involved in cap recognition and is required for mRNA binding to ribosome. In the current model of translation initiation, eIF4A unwinds RNA secondary structures in the 5'-UTR of mRNAs which is necessary to allow efficient binding of the small ribosomal subunit, and subsequent scanning for the initiator codon. The protein is ATP-dependent RNA helicase eIF4A (tif1) of Neosartorya fischeri (strain ATCC 1020 / DSM 3700 / CBS 544.65 / FGSC A1164 / JCM 1740 / NRRL 181 / WB 181) (Aspergillus fischerianus).